The primary structure comprises 255 residues: 4-hydroxy-tetrahydrodipicolinate reductase (255 aa).

NAD(+)-binding positions include 9-14 (GFKGRM), 89-91 (GTT), and 115-118 (APNF). His-145 serves as the catalytic Proton donor/acceptor. His-146 provides a ligand contact to (S)-2,3,4,5-tetrahydrodipicolinate. The Proton donor role is filled by Lys-149. 155–156 (GT) lines the (S)-2,3,4,5-tetrahydrodipicolinate pocket.

The protein belongs to the DapB family.

It is found in the cytoplasm. The catalysed reaction is (S)-2,3,4,5-tetrahydrodipicolinate + NAD(+) + H2O = (2S,4S)-4-hydroxy-2,3,4,5-tetrahydrodipicolinate + NADH + H(+). It carries out the reaction (S)-2,3,4,5-tetrahydrodipicolinate + NADP(+) + H2O = (2S,4S)-4-hydroxy-2,3,4,5-tetrahydrodipicolinate + NADPH + H(+). The protein operates within amino-acid biosynthesis; L-lysine biosynthesis via DAP pathway; (S)-tetrahydrodipicolinate from L-aspartate: step 4/4. In terms of biological role, catalyzes the conversion of 4-hydroxy-tetrahydrodipicolinate (HTPA) to tetrahydrodipicolinate. This chain is 4-hydroxy-tetrahydrodipicolinate reductase, found in Streptococcus thermophilus (strain CNRZ 1066).